The sequence spans 381 residues: Zinc finger CCCH domain-containing protein 61 (381 aa).

Residues 1 to 39 (MDVEHHKSGHISRPTVDIPPRKLLSSAKSPSSVSSPLRD) form a disordered region. Residues 21-37 (RKLLSSAKSPSSVSSPL) are compositionally biased toward low complexity. 2 consecutive C3H1-type zinc fingers follow at residues 101-128 (YTGE…HGVF) and 137-159 (YRTE…AHSP).

In terms of assembly, interacts with MARD1/FLZ9 and RD21A via its CCCH zing finger domains.

The protein resides in the cytoplasm. The protein localises to the stress granule. Its subcellular location is the P-body. This is Zinc finger CCCH domain-containing protein 61 from Arabidopsis thaliana (Mouse-ear cress).